Consider the following 146-residue polypeptide: Leghemoglobin 49 (146 aa).

A Globin domain is found at 2–146; that stretch reads GFTQQQEALV…LATAIKKAMS (145 aa). 2 positions are modified to nitrated tyrosine: Tyr-24 and Tyr-29. Ser-44 serves as a coordination point for heme b. The residue at position 44 (Ser-44) is a Phosphoserine. Residue His-61 coordinates O2. The heme b site is built by His-93 and Lys-96. Tyr-134 is subject to Nitrated tyrosine.

It belongs to the plant globin family. Monomer. Nitrated in effective nodules and particularly in hypoxic conditions; this mechanism may play a protective role in the symbiosis by buffering toxic peroxynitrite NO(2)(-). Nitration level decrease during nodule senescence. Post-translationally, phosphorylation at Ser-44 disrupts the molecular environment of its porphyrin ring oxygen binding pocket, thus leading to a reduced oxygen consumption and to the delivery of oxygen O(2) to symbiosomes. Accumulates in root nodules after inoculation by bacteria of the genus Rhizobium.

The protein resides in the cytoplasm. The protein localises to the cytosol. It is found in the nucleus. Leghemoglobin that reversibly binds oxygen O(2) through a pentacoordinated heme iron. In root nodules, facilitates the diffusion of oxygen to the bacteroids while preventing the bacterial nitrogenase from being inactivated by buffering dioxygen, nitric oxide and carbon monoxide, and promoting the formation of reactive oxygen species (ROS, e.g. H(2)O(2)). This role is essential for symbiotic nitrogen fixation (SNF). The chain is Leghemoglobin 49 from Vicia faba (Broad bean).